The sequence spans 168 residues: G/U mismatch-specific DNA glycosylase (168 aa).

The protein belongs to the uracil-DNA glycosylase (UDG) superfamily. TDG/mug family. In terms of assembly, binds DNA as a monomer.

The protein localises to the cytoplasm. It catalyses the reaction Specifically hydrolyzes mismatched double-stranded DNA and polynucleotides, releasing free uracil.. Functionally, excises ethenocytosine and uracil, which can arise by alkylation or deamination of cytosine, respectively, from the corresponding mispairs with guanine in ds-DNA. It is capable of hydrolyzing the carbon-nitrogen bond between the sugar-phosphate backbone of the DNA and the mispaired base. The complementary strand guanine functions in substrate recognition. Required for DNA damage lesion repair in stationary-phase cells. This Shigella dysenteriae serotype 1 (strain Sd197) protein is G/U mismatch-specific DNA glycosylase.